The following is a 704-amino-acid chain: UvrABC system protein B (704 aa).

In terms of domain architecture, Helicase ATP-binding spans 35–188; that stretch reads ERINNGEKDV…DDLLRKFVSM (154 aa). 48–55 contributes to the ATP binding site; it reads GATGTGKS. A Beta-hairpin motif is present at residues 101–124; it reads YYDYYQPEAYVAQTDTFIEKDSSI. The region spanning 438 to 604 is the Helicase C-terminal domain; that stretch reads QIDDLLGEIR…PLRKKIADIT (167 aa). The UVR domain maps to 659–694; that stretch reads VGMIAQLTEQMHGAAAELQFEVAARIRDEVSELKKE.

The protein belongs to the UvrB family. As to quaternary structure, forms a heterotetramer with UvrA during the search for lesions. Interacts with UvrC in an incision complex.

It is found in the cytoplasm. Functionally, the UvrABC repair system catalyzes the recognition and processing of DNA lesions. A damage recognition complex composed of 2 UvrA and 2 UvrB subunits scans DNA for abnormalities. Upon binding of the UvrA(2)B(2) complex to a putative damaged site, the DNA wraps around one UvrB monomer. DNA wrap is dependent on ATP binding by UvrB and probably causes local melting of the DNA helix, facilitating insertion of UvrB beta-hairpin between the DNA strands. Then UvrB probes one DNA strand for the presence of a lesion. If a lesion is found the UvrA subunits dissociate and the UvrB-DNA preincision complex is formed. This complex is subsequently bound by UvrC and the second UvrB is released. If no lesion is found, the DNA wraps around the other UvrB subunit that will check the other stand for damage. This chain is UvrABC system protein B, found in Pseudarthrobacter chlorophenolicus (strain ATCC 700700 / DSM 12829 / CIP 107037 / JCM 12360 / KCTC 9906 / NCIMB 13794 / A6) (Arthrobacter chlorophenolicus).